A 758-amino-acid polypeptide reads, in one-letter code: 5-methyltetrahydropteroyltriglutamate--homocysteine methyltransferase (758 aa).

Residues 17-20 and K117 contribute to the 5-methyltetrahydropteroyltri-L-glutamate site; that span reads RELK. L-homocysteine-binding positions include 434-436 and E487; that span reads IGS. L-methionine contacts are provided by residues 434-436 and E487; that span reads IGS. 5-methyltetrahydropteroyltri-L-glutamate-binding positions include 518-519 and W564; that span reads RC. D602 contacts L-homocysteine. D602 contacts L-methionine. E608 contacts 5-methyltetrahydropteroyltri-L-glutamate. Positions 644, 646, and 668 each coordinate Zn(2+). H697 acts as the Proton donor in catalysis. A Zn(2+)-binding site is contributed by C729.

This sequence belongs to the vitamin-B12 independent methionine synthase family. The cofactor is Zn(2+).

The catalysed reaction is 5-methyltetrahydropteroyltri-L-glutamate + L-homocysteine = tetrahydropteroyltri-L-glutamate + L-methionine. The protein operates within amino-acid biosynthesis; L-methionine biosynthesis via de novo pathway; L-methionine from L-homocysteine (MetE route): step 1/1. Functionally, catalyzes the transfer of a methyl group from 5-methyltetrahydrofolate to homocysteine resulting in methionine formation. This chain is 5-methyltetrahydropteroyltriglutamate--homocysteine methyltransferase, found in Yersinia pseudotuberculosis serotype O:1b (strain IP 31758).